The chain runs to 473 residues: JmjC domain-containing protein 4 (473 aa).

One can recognise a JmjC domain in the interval 140–433; sequence PTDGLLTDFS…DFDHPYLDRN (294 aa). The segment at 452–473 is disordered; it reads TNKKNEKRPAEDDSPSQKKTCQ.

The protein resides in the nucleus. In terms of biological role, has a role in meiosis. In Schizosaccharomyces pombe (strain 972 / ATCC 24843) (Fission yeast), this protein is JmjC domain-containing protein 4 (jmj4).